A 398-amino-acid polypeptide reads, in one-letter code: S-adenosylmethionine synthase (398 aa).

His-16 contacts ATP. Asp-18 is a binding site for Mg(2+). Glu-51 provides a ligand contact to K(+). Residues Glu-64 and Gln-108 each coordinate L-methionine. Residues 108-118 (QSADIAQGVDA) are flexible loop. Residues 176–178 (DSK), 242–243 (KF), Asp-251, 257–258 (RK), Ala-274, and Lys-278 each bind ATP. Asp-251 contributes to the L-methionine binding site. Lys-282 contributes to the L-methionine binding site.

Belongs to the AdoMet synthase family. In terms of assembly, homotetramer; dimer of dimers. Mg(2+) serves as cofactor. It depends on K(+) as a cofactor.

It is found in the cytoplasm. The enzyme catalyses L-methionine + ATP + H2O = S-adenosyl-L-methionine + phosphate + diphosphate. Its pathway is amino-acid biosynthesis; S-adenosyl-L-methionine biosynthesis; S-adenosyl-L-methionine from L-methionine: step 1/1. In terms of biological role, catalyzes the formation of S-adenosylmethionine (AdoMet) from methionine and ATP. The overall synthetic reaction is composed of two sequential steps, AdoMet formation and the subsequent tripolyphosphate hydrolysis which occurs prior to release of AdoMet from the enzyme. The polypeptide is S-adenosylmethionine synthase (Rhodopseudomonas palustris (strain BisB5)).